The primary structure comprises 264 residues: Methionine aminopeptidase (264 aa).

A substrate-binding site is contributed by H79. Residues D97, D108, and H171 each contribute to the a divalent metal cation site. H178 contacts substrate. E204 and E235 together coordinate a divalent metal cation.

The protein belongs to the peptidase M24A family. Methionine aminopeptidase type 1 subfamily. As to quaternary structure, monomer. Co(2+) is required as a cofactor. Zn(2+) serves as cofactor. The cofactor is Mn(2+). Requires Fe(2+) as cofactor.

It carries out the reaction Release of N-terminal amino acids, preferentially methionine, from peptides and arylamides.. Its function is as follows. Removes the N-terminal methionine from nascent proteins. The N-terminal methionine is often cleaved when the second residue in the primary sequence is small and uncharged (Met-Ala-, Cys, Gly, Pro, Ser, Thr, or Val). Requires deformylation of the N(alpha)-formylated initiator methionine before it can be hydrolyzed. The sequence is that of Methionine aminopeptidase from Escherichia coli O157:H7.